Consider the following 211-residue polypeptide: ATP phosphoribosyltransferase (211 aa).

It belongs to the ATP phosphoribosyltransferase family. Short subfamily. In terms of assembly, heteromultimer composed of HisG and HisZ subunits.

It is found in the cytoplasm. It carries out the reaction 1-(5-phospho-beta-D-ribosyl)-ATP + diphosphate = 5-phospho-alpha-D-ribose 1-diphosphate + ATP. The protein operates within amino-acid biosynthesis; L-histidine biosynthesis; L-histidine from 5-phospho-alpha-D-ribose 1-diphosphate: step 1/9. Catalyzes the condensation of ATP and 5-phosphoribose 1-diphosphate to form N'-(5'-phosphoribosyl)-ATP (PR-ATP). Has a crucial role in the pathway because the rate of histidine biosynthesis seems to be controlled primarily by regulation of HisG enzymatic activity. This is ATP phosphoribosyltransferase (hisG) from Pseudomonas aeruginosa (strain ATCC 15692 / DSM 22644 / CIP 104116 / JCM 14847 / LMG 12228 / 1C / PRS 101 / PAO1).